Here is a 182-residue protein sequence, read N- to C-terminus: ATP-dependent protease subunit HslV (182 aa).

Residue T6 is part of the active site. The Na(+) site is built by A164, C167, and T170.

The protein belongs to the peptidase T1B family. HslV subfamily. A double ring-shaped homohexamer of HslV is capped on each side by a ring-shaped HslU homohexamer. The assembly of the HslU/HslV complex is dependent on binding of ATP.

It is found in the cytoplasm. It carries out the reaction ATP-dependent cleavage of peptide bonds with broad specificity.. With respect to regulation, allosterically activated by HslU binding. In terms of biological role, protease subunit of a proteasome-like degradation complex believed to be a general protein degrading machinery. The sequence is that of ATP-dependent protease subunit HslV from Borreliella burgdorferi (strain ATCC 35210 / DSM 4680 / CIP 102532 / B31) (Borrelia burgdorferi).